Here is a 267-residue protein sequence, read N- to C-terminus: Low affinity immunoglobulin gamma Fc region receptor III (267 aa).

The signal sequence occupies residues 1–36 (MTLETQMFQNAHSGSQWLLPPLTMLLLFAFADRQTA). The Extracellular segment spans residues 37–221 (NLPKAVVKRD…STSSLVWFHA (185 aa)). Ig-like C2-type domains are found at residues 39–121 (PKAV…EVIS) and 122–204 (DWLL…VTIT). 2 disulfide bridges follow: C62–C104 and C143–C187. Residues N70, N78, N97, N171, and N178 are each glycosylated (N-linked (GlcNAc...) asparagine). The helical transmembrane segment at 222 to 241 (AFCLVMCLLFAVDTGLYFCV) threads the bilayer. The Cytoplasmic segment spans residues 242 to 267 (RRNLQTSGEDWRKSLSVGKYKAPQDK).

In terms of assembly, may form multisubunit complex with other heteroproteins. This association is required for efficient cell-surface expression. Does not associate with CD3 zeta. In terms of tissue distribution, expressed on natural killer cells and macrophages.

It localises to the cell membrane. In terms of biological role, receptor for the Fc region of complexed immunoglobulins gamma. Low affinity receptor which binds to IgG1, IgG2a and IgG2b. Mediates neutrophil activation by IgG complexes redundantly with Fcgr4. This Rattus norvegicus (Rat) protein is Low affinity immunoglobulin gamma Fc region receptor III (Fcgr3).